The chain runs to 313 residues: Homeobox protein CDX-2 (313 aa).

Residue Ser-60 is modified to Phosphoserine. The disordered stretch occupies residues 113–153 (HAHHHPHHHPHHPAAAPSCASGLLQTLNPGPPGPAATGAAE). The span at 114-124 (AHHHPHHHPHH) shows a compositional bias: basic residues. Residues 185–215 (KDKYRVVYTDHQRLELEKEFHYSRYITIRRK) are interaction with DNA. Residues 185-244 (KDKYRVVYTDHQRLELEKEFHYSRYITIRRKAELAATLGLSERQVKIWFQNRRAKERKIN) constitute a DNA-binding region (homeobox). Positions 227-241 (RQVKIWFQNRRAKER) are interaction with 5-mCpG DNA. Positions 242–313 (KINKKKLQQQ…GGVLNPTVTQ (72 aa)) are disordered. Composition is skewed to low complexity over residues 249 to 261 (QQQQ…QQLA) and 271 to 300 (QPGS…PGVL). A Phosphoserine modification is found at Ser-283. The 4S motif; modulates transactivation activity and protein stability signature appears at 283 to 295 (SPVSSLQGSVPGS).

This sequence belongs to the Caudal homeobox family. As to quaternary structure, can bind DNA as a monomer or homodimer. In terms of processing, ubiquitinated, leading to its degradation by the proteasome. Phosphorylation at Ser-60 reduces transactivation capacity. Phosphorylation at Ser-283 reduces transactivation capacity and also increases ubiquitin-dependent proteasome degradation. As to expression, expressed in the intestine.

It is found in the nucleus. Transcription factor which regulates the transcription of multiple genes expressed in the intestinal epithelium. Binds to the promoter of the intestinal sucrase-isomaltase SI and activates SI transcription. Binds to the DNA sequence 5'-ATAAAAACTTAT-3' in the promoter region of VDR and activates VDR transcription. Binds to and activates transcription of LPH. Activates transcription of CLDN2 and intestinal mucin MUC2. Binds to the 5'-AATTTTTTACAACACCT-3' DNA sequence in the promoter region of CA1 and activates CA1 transcription. Important in broad range of functions from early differentiation to maintenance of the intestinal epithelial lining of both the small and large intestine. Binds preferentially to methylated DNA. In Mesocricetus auratus (Golden hamster), this protein is Homeobox protein CDX-2 (CDX2).